A 278-amino-acid chain; its full sequence is Rhomboid protease GlpG (278 aa).

Helical transmembrane passes span 95-115 (GPLTLSVMVLCIAIYILMQIV), 143-163 (AFLHFSLLHILFNLMWWWYLA), 170-190 (LGTGKLLVLTIVSALFSGWGQ), 192-212 (LFSGVNFGGLSGVVYALMGYV), 224-241 (ISLPRGLMAFSVLWLVAG), and 245-267 (ILGLSIANAAHVSGLIIGLLMAF). The Nucleophile role is filled by S202. H255 is an active-site residue.

It belongs to the peptidase S54 family.

The protein localises to the cell inner membrane. The enzyme catalyses Cleaves type-1 transmembrane domains using a catalytic dyad composed of serine and histidine that are contributed by different transmembrane domains.. Its function is as follows. Rhomboid-type serine protease that catalyzes intramembrane proteolysis. The sequence is that of Rhomboid protease GlpG from Yersinia enterocolitica serotype O:8 / biotype 1B (strain NCTC 13174 / 8081).